The following is a 255-amino-acid chain: Putative F-box protein L126 (255 aa).

Positions 1–46 constitute an F-box domain; sequence MLPEEILFMVFSFLDVKELIACSHACSHACSQWRRICSDKLLWVQK.

In Acanthamoeba polyphaga (Amoeba), this protein is Putative F-box protein L126.